Consider the following 677-residue polypeptide: MQPAMLLGLLGAAALAAVSSAPVDNRDHNEEMVTRCIIEVLSNALSKSSVPTITPECRQVLKKSGKEVKGEEKGENQNSKFEVRLLRDPADASGTRWASSREDAGAPVEDSQGQTKVGNEKWTEGGGHSREGVDDQESLRPSNQQASKEAKIYHSEERVGKEREKEEGKIYPMGEHREDAGEEKKHIEDSGEKPNTFSNKRSEASAKKKDESVARADAHSMELEEKTHSREQSSQESGEETRRQEKPQELTDQDQSQEESQEGEEGEEGEEGEEGEEDSASEVTKRRPRHHHGRSGSNKSSYEGHPLSEERRPSPKESKEADVATVRLGEKRSHHLAHYRASEEEPEYGEESRSYRGLQYRGRGSEEDRAPRPRSEESQEREYKRNHPDSELESTANRHGEETEEERSYEGANGRQHRGRGREPGAHSALDTREEKRLLDEGHYPVRESPIDTAKRYPQSKWQEQEKNYLNYGEEGDQGRWWQQEEQLGPEESREEVRFPDRQYEPYPITEKRKRLGALFNPYFDPLQWKNSDFEKRGNPDDSFLEDEGEDRNGVTLTEKNSFPEYNYDWWERRPFSEDVNWGYEKRSFARAPQLDLKRQYDGVAELDQLLHYRKKADEFPDFYDSEEQMGPHQEANDEKARADQRVLTAEEKKELENLAAMDLELQKIAEKFSQRG.

The N-terminal stretch at 1–20 (MQPAMLLGLLGAAALAAVSS) is a signal peptide. Residues C36 and C57 are joined by a disulfide bond. Disordered regions lie at residues 63 to 505 (KSGK…RQYE) and 531 to 558 (NSDF…VTLT). The segment covering 64–90 (SGKEVKGEEKGENQNSKFEVRLLRDPA) has biased composition (basic and acidic residues). S93, S99, and S100 each carry phosphoserine. A glycan (O-linked (Xyl...) (chondroitin sulfate) serine) is linked at S93. The O-linked (GalNAc...) threonine glycan is linked to T115. Residues 118–133 (GNEKWTEGGGHSREGV) are compositionally biased toward basic and acidic residues. Phosphoserine is present on residues S129, S147, S190, and S220. Composition is skewed to basic and acidic residues over residues 148–192 (KEAK…DSGE) and 200–249 (KRSE…KPQE). O-linked (Xyl...) (chondroitin sulfate) serine glycosylation is present at S237. Over residues 251-280 (TDQDQSQEESQEGEEGEEGEEGEEGEEDSA) the composition is skewed to acidic residues. A phosphoserine mark is found at S256, S260, S300, S301, S318, and S342. Residues 306–322 (PLSEERRPSPKESKEAD) show a composition bias toward basic and acidic residues. A Sulfotyrosine modification is found at Y348. Basic and acidic residues-rich tracts occupy residues 363-409 (RGSE…ERSY) and 421-455 (GREP…DTAK). A phosphoserine mark is found at S365, S375, and S378. Y472 bears the Sulfotyrosine mark. Residues 491–504 (EESREEVRFPDRQY) show a composition bias toward basic and acidic residues. 3 positions are modified to phosphoserine: S493, S532, and S543. A sulfotyrosine mark is found at Y566 and Y624. Positions 622–646 (DFYDSEEQMGPHQEANDEKARADQR) are disordered. Phosphoserine is present on S626. The segment covering 635-646 (EANDEKARADQR) has biased composition (basic and acidic residues).

Belongs to the chromogranin/secretogranin protein family. Interacts with ITPR1 in the secretory granules.

It is found in the secreted. Its function is as follows. Secretogranin-1 is a neuroendocrine secretory granule protein, which may be the precursor for other biologically active peptides. This is Secretogranin-1 (Chgb) from Mus musculus (Mouse).